The following is a 98-amino-acid chain: RING finger protein Z (98 aa).

The segment covering 1–10 (MGNTKTKDRQ) has biased composition (basic and acidic residues). The tract at residues 1 to 26 (MGNTKTKDRQYQSNSSQPTNTSAPVL) is disordered. The N-myristoyl glycine; by host moiety is linked to residue Gly-2. Residues 11 to 23 (YQSNSSQPTNTSA) show a composition bias toward polar residues. An RING-type; atypical zinc finger spans residues 41 to 77 (CRCCWFADTNLVNCSNHYLCLKCLNTMLRRSNLCDIC). Residues 91 to 94 (PSAP) carry the PTAP/PSAP motif motif.

This sequence belongs to the arenaviridae Z protein family. As to quaternary structure, interacts with protein NP; this interaction probably directs the encapsidated genome to budding sites. Interacts (via RING domain) with polymerase L; this interaction inhibits viral transcription and replication, Z partially blocks the product exit tunnel for the releasing nascent RNA product. Interacts with the glycoprotein complex; this interaction plays a role in virion budding. Interacts with host eIF4E; this interaction results in eIF4E reduced affinity for its substrate, the 5'-m7 G cap structure. Interacts (via late-budding domain) with host TSG101; this interaction is essential for budding and release of viral particles. Interacts with host RPLP0; this interaction may serve to load ribosome-like particles inside the virion. Interacts with host PML; this interaction induces PML bodies redistribution in the cytoplasm upon viral infection. Post-translationally, myristoylation is required for the role of RING finger protein Z in assembly and budding.

The protein localises to the virion. It localises to the host cytoplasm. Its subcellular location is the host perinuclear region. The protein resides in the host cell membrane. Plays a crucial role in virion assembly and budding. Expressed late in the virus life cycle, it acts as an inhibitor of viral transcription and RNA synthesis by interacting with the viral polymerase L. Presumably recruits the NP encapsidated genome to cellular membranes at budding sites via direct interaction with NP. Plays critical roles in the final steps of viral release by interacting with host TSG101, a member of the vacuolar protein-sorting pathway and using other cellular host proteins involved in vesicle formation pathway. The budding of the virus progeny occurs after association of protein Z with the viral glycoprotein complex SSP-GP1-GP2 at the cell periphery, step that requires myristoylation of protein Z. Also selectively represses protein production by associating with host eIF4E. In cell-based minigenome assay, has an inhibitory effect on the ribonucleoprotein machinery (vRNP), which is responsible for the replication and transcription of the viral genome. The chain is RING finger protein Z from Chapare mammarenavirus (isolate Human/Bolivia/810419/2003).